The chain runs to 270 residues: Phospholysine phosphohistidine inorganic pyrophosphate phosphatase (270 aa).

Mg(2+)-binding residues include Asp17 and Ser19. Substrate contacts are provided by residues 17-19 (DIS), 54-55 (TN), and Lys189. Asp214 contacts Mg(2+).

It belongs to the HAD-like hydrolase superfamily. Homodimer. Mg(2+) is required as a cofactor. In terms of tissue distribution, detected in liver (at protein level).

Its subcellular location is the cytoplasm. It is found in the nucleus. It carries out the reaction diphosphate + H2O = 2 phosphate + H(+). In terms of biological role, phosphatase that hydrolyzes imidodiphosphate, 3-phosphohistidine and 6-phospholysine. Has broad substrate specificity and can also hydrolyze inorganic diphosphate, but with lower efficiency. This chain is Phospholysine phosphohistidine inorganic pyrophosphate phosphatase (LHPP), found in Bos taurus (Bovine).